The following is a 123-amino-acid chain: Small ribosomal subunit protein uS12cz/uS12cy (123 aa).

It belongs to the universal ribosomal protein uS12 family. As to quaternary structure, part of the 30S ribosomal subunit.

The protein localises to the plastid. The protein resides in the chloroplast. With S4 and S5 plays an important role in translational accuracy. Located at the interface of the 30S and 50S subunits. The polypeptide is Small ribosomal subunit protein uS12cz/uS12cy (rps12-A) (Populus alba (White poplar)).